Reading from the N-terminus, the 727-residue chain is Glycerol-3-phosphate dehydrogenase, mitochondrial (727 aa).

The transit peptide at M1–A42 directs the protein to the mitochondrion. D71–E99 is a binding site for FAD. Y601 bears the Phosphotyrosine mark. EF-hand domains lie at S623–Q658 and M659–G694. Residues D672, N674, N676, Q678, and E683 each contribute to the Ca(2+) site.

The protein belongs to the FAD-dependent glycerol-3-phosphate dehydrogenase family. FAD is required as a cofactor.

The protein resides in the mitochondrion. It catalyses the reaction a quinone + sn-glycerol 3-phosphate = dihydroxyacetone phosphate + a quinol. It functions in the pathway polyol metabolism; glycerol degradation via glycerol kinase pathway; glycerone phosphate from sn-glycerol 3-phosphate (aerobic route): step 1/1. Its activity is regulated as follows. Calcium-binding enhance the activity of the enzyme. Its function is as follows. Calcium-responsive mitochondrial glycerol-3-phosphate dehydrogenase which seems to be a key component of the pancreatic beta-cell glucose-sensing device. The protein is Glycerol-3-phosphate dehydrogenase, mitochondrial (GPD2) of Macaca fascicularis (Crab-eating macaque).